Reading from the N-terminus, the 254-residue chain is Hydrolase tropI (254 aa).

Residues C141, D187, and H219 contribute to the active site.

This sequence belongs to the dienelactone hydrolase family.

Its pathway is secondary metabolite biosynthesis. In terms of biological role, hydrolase; part of the gene cluster that mediates the biosynthesis of the tropolone class of fungal maleic anhydrides. The pathway begins with the synthesis of 3-methylorcinaldehyde by the non-reducing polyketide synthase (PKS) tropA. 3-methylorcinaldehyde is the substrate for the FAD-dependent monooxygenase tropB to yield a dearomatized hydroxycyclohexadione. The 2-oxoglutarate-dependent dioxygenase tropC then performs the oxidative ring expansion to provide the first tropolone metabolite stipitaldehyde. Trop D converts stipitaldehyde into stipitacetal which is in turn converted to stipitalide by the short-chain dehydrogenase/reductase tropE. The next steps involve tropF, tropG, tropH, tropI and tropJ to form successive tropolone maleic anhydrides including stipitaldehydic, stipitatonic and stipitatic acids. The polypeptide is Hydrolase tropI (Talaromyces stipitatus (strain ATCC 10500 / CBS 375.48 / QM 6759 / NRRL 1006) (Penicillium stipitatum)).